Reading from the N-terminus, the 465-residue chain is Trigger factor (465 aa).

The PPIase FKBP-type domain occupies 163 to 248; that stretch reads GDVINFNFKG…INKIKENQPA (86 aa). The disordered stretch occupies residues 431–465; the sequence is EIVNKNQNDNEIEQDKEQKDNNEEKIKQENNLENK. Basic and acidic residues predominate over residues 443-465; that stretch reads EQDKEQKDNNEEKIKQENNLENK.

It belongs to the FKBP-type PPIase family. Tig subfamily.

Its subcellular location is the cytoplasm. The catalysed reaction is [protein]-peptidylproline (omega=180) = [protein]-peptidylproline (omega=0). Functionally, involved in protein export. Acts as a chaperone by maintaining the newly synthesized protein in an open conformation. Functions as a peptidyl-prolyl cis-trans isomerase. The chain is Trigger factor from Mesomycoplasma hyopneumoniae (strain J / ATCC 25934 / NCTC 10110) (Mycoplasma hyopneumoniae).